The following is a 753-amino-acid chain: Lysyl oxidase homolog 3 (753 aa).

An N-terminal signal peptide occupies residues 1-25 (MRPVSVWQWSPWGLLLCLLCSSCLG). SRCR domains lie at 44–145 (FRLA…VICK) and 169–282 (VRIR…VSCV). 6 disulfide bridges follow: Cys70/Cys134, Cys83/Cys144, Cys114/Cys124, Cys201/Cys271, Cys214/Cys281, and Cys248/Cys258. An N-linked (GlcNAc...) asparagine glycan is attached at Asn111. The N-linked (GlcNAc...) asparagine glycan is linked to Asn266. A compositionally biased stretch (low complexity) spans 290–302 (SSGQKKQQQSKPQ). The segment at 290–315 (SSGQKKQQQSKPQGEARVRLKGGAHP) is disordered. SRCR domains lie at 307–407 (VRLK…VRCN) and 417–525 (IRLS…VICS). 11 cysteine pairs are disulfide-bonded: Cys332/Cys396, Cys345/Cys406, Cys376/Cys386, Cys446/Cys511, Cys459/Cys524, Cys492/Cys502, Cys554/Cys560, Cys606/Cys654, Cys638/Cys644, Cys666/Cys676, and Cys713/Cys727. Asn390 and Asn481 each carry an N-linked (GlcNAc...) asparagine glycan. Residues 529-732 (SDLLLHSALV…WVHNCHIGDA (204 aa)) form a lysyl-oxidase like region. 3 residues coordinate Cu cation: His607, His609, and His611. An N-linked (GlcNAc...) asparagine glycan is attached at Asn625. The segment at residues 634–670 (KASFCLEDTECQEDVSKRYECANFGEQGITVGCWDLY) is a cross-link (lysine tyrosylquinone (Lys-Tyr)). Tyr670 is modified (2',4',5'-topaquinone).

Belongs to the lysyl oxidase family. Interacts with STAT3. It depends on Cu cation as a cofactor. Requires lysine tyrosylquinone residue as cofactor. The lysine tyrosylquinone cross-link (LTQ) is generated by condensation of the epsilon-amino group of a lysine with a topaquinone produced by oxidation of tyrosine. In terms of tissue distribution, isoform 1: Predominantly detected in the heart, placenta, lung, and small intestine. Isoform 2: Highly detected in the kidney, pancreas, spleen, and thymus, and is absent in lung. In eye, present in all layers of corneas as well as in the limbus and conjunctiva (at protein level).

The protein resides in the secreted. The protein localises to the extracellular space. It is found in the cytoplasm. It localises to the nucleus. The catalysed reaction is L-lysyl-[protein] + O2 + H2O = (S)-2-amino-6-oxohexanoyl-[protein] + H2O2 + NH4(+). It carries out the reaction N(6)-acetyl-L-lysyl-[protein] + O2 + H2O = acetamide + (S)-2-amino-6-oxohexanoyl-[protein] + H2O2. Protein-lysine 6-oxidase that mediates the oxidation of peptidyl lysine residues to allysine in target proteins. Catalyzes the post-translational oxidative deamination of peptidyl lysine residues in precursors of elastin and different types of collagens, a prerequisite in the formation of cross-links between collagens and elastin. Required for somite boundary formation by catalyzing oxidation of fibronectin (FN1), enhancing integrin signaling in myofibers and their adhesion to the myotendinous junction (MTJ). Acts as a regulator of inflammatory response by inhibiting differentiation of naive CD4(+) T-cells into T-helper Th17 or regulatory T-cells (Treg): acts by interacting with STAT3 in the nucleus and catalyzing both deacetylation and oxidation of lysine residues on STAT3, leading to disrupt STAT3 dimerization and inhibit STAT3 transcription activity. Oxidation of lysine residues to allysine on STAT3 preferentially takes place on lysine residues that are acetylated. Also able to catalyze deacetylation of lysine residues on STAT3. Its function is as follows. Shows protein-lysine 6-oxidase activity toward elastin and different types of collagens, with the highest activity toward collagen type VIII. Functionally, shows protein-lysine 6-oxidase activity toward elastin and different types of collagens, with the highest activity toward collagen type IV. This Homo sapiens (Human) protein is Lysyl oxidase homolog 3.